A 703-amino-acid polypeptide reads, in one-letter code: Antigen peptide transporter 2 (703 aa).

Topologically, residues 1–6 (MALSHP) are lumenal. Residues 7–27 (RPWASLLLVDLALLGLLQSSL) traverse the membrane as a helical segment. The Cytoplasmic segment spans residues 28 to 56 (GTLLPPGLPGLWLEGTLRLGVLWGLLKVG). The helical transmembrane segment at 57–77 (GLLRLVGTFLPLLCLTNPLFF) threads the bilayer. Residues 78 to 98 (SLRALVGSTMSTSVVRVASAS) lie on the Lumenal side of the membrane. Residues 99-119 (WGWLLADYGAVALSLAVWAVL) traverse the membrane as a helical segment. Over 120 to 148 (SPAGAQEKEPGQENNRALMIRLLRLSKPD) the chain is Cytoplasmic. Residues 149-169 (LPFLIVAFIFLAMAVWWEMFI) traverse the membrane as a helical segment. The region spanning 152 to 435 (LIVAFIFLAM…LVYMYGDMLS (284 aa)) is the ABC transmembrane type-1 domain. Residues 170-187 (PHYSGRVIDILGGDFDPD) are Lumenal-facing. Residues 188–208 (AFASAIFFMCLFSVGSSLSAG) form a helical membrane-spanning segment. Residues 209–266 (CRGGSFLFAESRINLRIREQLFSSLLRQDLAFFQETKTGELNSRLSSDTSLMSQWLSL) are Cytoplasmic-facing. Residues 267–287 (NANILLRSLVKVVGLYYFMLQ) form a helical membrane-spanning segment. The Lumenal segment spans residues 288–293 (VSPRLT). A helical membrane pass occupies residues 294-314 (FLSLLDLPLTIAAEKVYNPRH). A part of the peptide-binding site region spans residues 301 to 389 (PLTIAAEKVY…QRVMALGMQV (89 aa)). Over 315–374 (QAVLKEIQDAVAKAGQVVREAVGGLQTVRSFGAEEQEVRRYKEALERCRQLWWRRDLEKS) the chain is Cytoplasmic. The chain crosses the membrane as a helical span at residues 375-395 (LYLVIQRVMALGMQVLILNVG). Topologically, residues 396-408 (VQQILAGEVTRGG) are lumenal. A helical membrane pass occupies residues 409–429 (LLSFLLYQEEVGHHVQNLVYM). The part of the peptide-binding site stretch occupies residues 414-433 (LYQEEVGHHVQNLVYMYGDM). Topologically, residues 430–703 (YGDMLSNVGA…AHLVQQRLEA (274 aa)) are cytoplasmic. Residues 468-702 (VEFQDVSFSY…YAHLVQQRLE (235 aa)) form the ABC transporter domain. Residue 503–510 (GPNGSGKS) coordinates ATP.

This sequence belongs to the ABC transporter superfamily. ABCB family. MHC peptide exporter (TC 3.A.1.209) subfamily. As to quaternary structure, heterodimer of TAP1 and TAP2 (TAP1-TAP2). A component of the peptide loading complex (PLC), interacts via TAPBP with MHCI heterodimer; this interaction mediates peptide-MHCI assembly. Requires Mg(2+) as cofactor.

The protein resides in the endoplasmic reticulum membrane. It carries out the reaction a peptide antigen(in) + ATP + H2O = a peptide antigen(out) + ADP + phosphate + H(+). ABC transporter associated with antigen processing. In complex with TAP1 mediates unidirectional translocation of peptide antigens from cytosol to endoplasmic reticulum (ER) for loading onto MHC class I (MHCI) molecules. Uses the chemical energy of ATP to export peptides against the concentration gradient. During the transport cycle alternates between 'inward-facing' state with peptide binding site facing the cytosol to 'outward-facing' state with peptide binding site facing the ER lumen. Peptide antigen binding to ATP-loaded TAP1-TAP2 induces a switch to hydrolysis-competent 'outward-facing' conformation ready for peptide loading onto nascent MHCI molecules. Subsequently ATP hydrolysis resets the transporter to the 'inward facing' state for a new cycle. As a component of the peptide loading complex (PLC), acts as a molecular scaffold essential for peptide-MHCI assembly and antigen presentation. The polypeptide is Antigen peptide transporter 2 (Tap2) (Rattus norvegicus (Rat)).